Reading from the N-terminus, the 22-residue chain is Unknown protein from spot 168 of 2D-PAGE of etiolated coleoptile (22 aa).

This is Unknown protein from spot 168 of 2D-PAGE of etiolated coleoptile from Zea mays (Maize).